The sequence spans 580 residues: PX domain-containing protein kinase-like protein (580 aa).

The 113-residue stretch at 14-126 folds into the PX domain; the sequence is LDDTVPLTAA…KFLDPNNYSA (113 aa). Residues 88–481 form the Protein kinase domain; that stretch reads FIAERQKGLQ…VENSEEQPVK (394 aa). Residues 433–551 form a disordered region; it reads EQKQIHQHRR…LPQAVNGVNR (119 aa). Basic residues-rich tracts occupy residues 437 to 448 and 457 to 469; these read IHQHRRLTRAQS and KRRK…KSKR. The span at 483-514 shows a compositional bias: low complexity; sequence SNANNSAGSGASSPLTSPSSPTPPSTAGLSSA. Residues 515–531 show a composition bias toward pro residues; that stretch reads LPPPPPPPPPPPPPAGP. Residues 549–568 enclose the WH2 domain; that stretch reads VNRGALLSSIQNFQKGTLRK.

Belongs to the protein kinase superfamily.

The protein resides in the cytoplasm. It is found in the cell membrane. In terms of biological role, binds to and modulates brain Na,K-ATPase subunits ATP1B1 and ATP1B3 and may thereby participate in the regulation of electrical excitability and synaptic transmission. May not display kinase activity. In Rattus norvegicus (Rat), this protein is PX domain-containing protein kinase-like protein.